The following is a 729-amino-acid chain: Methionine--tRNA ligase (729 aa).

The 'HIGH' region motif lies at 12–22 (PYVNNIPHLGN). 4 residues coordinate Zn(2+): C143, C146, C155, and C158. The 'KMSKS' region motif lies at 330–334 (KFSKS). Residue K333 participates in ATP binding. Residues 565–670 (FSEQVCLKVV…DNPIPGERII (106 aa)) enclose the tRNA-binding domain.

Belongs to the class-I aminoacyl-tRNA synthetase family. MetG type 1 subfamily. As to quaternary structure, homodimer. Requires Zn(2+) as cofactor.

It is found in the cytoplasm. It catalyses the reaction tRNA(Met) + L-methionine + ATP = L-methionyl-tRNA(Met) + AMP + diphosphate. In terms of biological role, is required not only for elongation of protein synthesis but also for the initiation of all mRNA translation through initiator tRNA(fMet) aminoacylation. The sequence is that of Methionine--tRNA ligase from Borrelia hermsii (strain HS1 / DAH).